Reading from the N-terminus, the 535-residue chain is Cytochrome P450 monooxygenase claQ (535 aa).

2 consecutive transmembrane segments (helical) span residues 7-27 and 225-245; these read IGTW…KLVG and YFAI…NLPT. Cys472 contacts heme.

The protein belongs to the cytochrome P450 family. Heme is required as a cofactor.

It is found in the membrane. It participates in secondary metabolite biosynthesis; terpenoid biosynthesis. Functionally, cytochrome P450 monooxygenase; part of the gene cluster that mediates the biosynthesis of clavilactone A, a meroterpenoid that features a unique benzo-fused ten-membered carbocyclic ring unit with an alpha,beta-epoxy-gamma-lactone moiety, forming an intriguing 10/5/3 tricyclic nested skeleton. Cytochrome P450 monooxygenases claO, claP, claQ, claU, and claW are close orthologs, suggesting that a redundant function or pseudogenes are present in the cla cluster. These monoxygenases are not involved in clavilactone A biosynthesis nor its modification. ClaR, ClaS and ClaT are sufficient to produce clavilactone A. The biosynthesis begins with the prenyltransferase claS that transfers geranyl pyrophosphate (GPP) to hydroquinone to produces geranylhydroquinone. The cytochrome P450 monooxygenase claR then catalyzes the diradical coupling reaction between the intramolecular hydroquinone and allyl moieties to form the benzo-fused ten-membered carbocyclic ring unit of wigantol. Finally the cytochrome P450 monooxygenase claT exquisitely and stereoselectively assembles the alpha,beta-epoxy-gamma-lactone moiety, producing clavilactone A via arnebinol A. This is Cytochrome P450 monooxygenase claQ from Ampulloclitocybe clavipes (Club foot).